Here is a 339-residue protein sequence, read N- to C-terminus: Fructose-1,6-bisphosphatase class 1 (339 aa).

Mg(2+)-binding residues include Glu-101, Asp-120, Leu-122, and Asp-123. Residues 123 to 126, Asn-215, and Lys-281 contribute to the substrate site; that span reads DGSS. Glu-287 is a Mg(2+) binding site.

The protein belongs to the FBPase class 1 family. Homotetramer. It depends on Mg(2+) as a cofactor.

Its subcellular location is the cytoplasm. It catalyses the reaction beta-D-fructose 1,6-bisphosphate + H2O = beta-D-fructose 6-phosphate + phosphate. The protein operates within carbohydrate biosynthesis; gluconeogenesis. This chain is Fructose-1,6-bisphosphatase class 1, found in Polynucleobacter necessarius subsp. necessarius (strain STIR1).